The chain runs to 268 residues: 5'-nucleotidase SurE (268 aa).

Residues Asp-8, Asp-9, Ser-40, and Asn-98 each contribute to the a divalent metal cation site.

It belongs to the SurE nucleotidase family. Requires a divalent metal cation as cofactor.

Its subcellular location is the cytoplasm. It carries out the reaction a ribonucleoside 5'-phosphate + H2O = a ribonucleoside + phosphate. Nucleotidase that shows phosphatase activity on nucleoside 5'-monophosphates. The protein is 5'-nucleotidase SurE of Trichodesmium erythraeum (strain IMS101).